Consider the following 482-residue polypeptide: Uric acid transporter UacT (482 aa).

The Cytoplasmic portion of the chain corresponds to 1-29; that stretch reads MSAIDSQLPSSSGQDRPTDEVDRILSPGK. A helical membrane pass occupies residues 30–50; sequence LIILGLQHVLVMYAGAVAVPL. Over 51–62 the chain is Periplasmic; that stretch reads MIGDRLGLSKEA. Residues 63 to 83 form a helical membrane-spanning segment; the sequence is IAMLISSDLFCCGIVTLLQCI. The Cytoplasmic portion of the chain corresponds to 84 to 92; that stretch reads GIGRFMGIR. The helical transmembrane segment at 93–113 threads the bilayer; sequence LPVIMSVTFAAVTPMIAIGMN. Over 114–115 the chain is Periplasmic; that stretch reads PD. Residues 116–136 traverse the membrane as a helical segment; the sequence is IGLLGIFGATIAAGFITTLLA. Over 137–142 the chain is Cytoplasmic; sequence PLIGRL. A helical transmembrane segment spans residues 143–163; that stretch reads MPLFPPLVTGVVITSIGLSII. Over 164–178 the chain is Periplasmic; that stretch reads QVGIDWAAGGKGNPQ. Residues 179 to 199 form a helical membrane-spanning segment; that stretch reads YGNPVYLGISFAVLIFILLIT. The Cytoplasmic segment spans residues 200–204; that stretch reads RYAKG. Residues 205-225 form a helical membrane-spanning segment; that stretch reads FMSNVAVLLGIVFGFLLSWMM. Topologically, residues 226-261 are periplasmic; that stretch reads NEVNLSGLHDASWFAIVTPMSFGMPIFDPVSILTMT. Residues 262-282 form a helical membrane-spanning segment; sequence AVLIIVFIESMGMFLALGEIV. Topologically, residues 283–337 are cytoplasmic; sequence GRKLSSHDIIRGLRVDGVGTMIGGTFNSFPHTSFSQNVGLVSVTRVHSRWVCISS. The chain crosses the membrane as a helical span at residues 338-358; that stretch reads GIILILFGMVPKMAVLVASIP. Position 359 (Gln359) is a topological domain, periplasmic. Residues 360–380 form a helical membrane-spanning segment; it reads FVLGGAGLVMFGMVLATGIRI. The Cytoplasmic portion of the chain corresponds to 381 to 392; the sequence is LSRCNYTTNRYN. The chain crosses the membrane as a helical span at residues 393-413; that stretch reads LYIVAISLGVGMTPTLSHDFF. Over 414–421 the chain is Periplasmic; that stretch reads SKLPAVLQ. A helical membrane pass occupies residues 422-442; the sequence is PLLHSGIMLATLSAVVLNVFF. Topologically, residues 443–482 are cytoplasmic; the sequence is NGYQHHADLVKESVSDKDLKVRTVRMWLLMRKLKKNEHGE.

Belongs to the nucleobase:cation symporter-2 (NCS2) (TC 2.A.40) family.

It is found in the cell inner membrane. Its activity is regulated as follows. Inhibited in the presence of the protonophore carbonyl cyanide m-chlorophenyl hydrazone. In terms of biological role, proton-dependent high-capacity transporter for uric acid. Also shows a low capacity for transport of xanthine at 37 degrees Celsius but not at 25 degrees Celsius. This is Uric acid transporter UacT (uacT) from Escherichia coli (strain K12).